Here is a 473-residue protein sequence, read N- to C-terminus: Photosystem II CP43 reaction center protein (473 aa).

Positions 1 to 14 (MKTLYSLRRSYPVE) are excised as a propeptide. The residue at position 15 (threonine 15) is an N-acetylthreonine. A Phosphothreonine modification is found at threonine 15. Transmembrane regions (helical) follow at residues 69–93 (LFEV…PHLA), 134–155 (LIGP…KDRN), 178–200 (KALY…RKIT), 255–275 (KPFA…LSYS), and 291–312 (WFNN…ASQA). Glutamate 367 contributes to the [CaMn4O5] cluster binding site. The chain crosses the membrane as a helical span at residues 447–471 (RARAAAAGFEKGIDRDFEPVLSMTP).

Belongs to the PsbB/PsbC family. PsbC subfamily. As to quaternary structure, PSII is composed of 1 copy each of membrane proteins PsbA, PsbB, PsbC, PsbD, PsbE, PsbF, PsbH, PsbI, PsbJ, PsbK, PsbL, PsbM, PsbT, PsbX, PsbY, PsbZ, Psb30/Ycf12, at least 3 peripheral proteins of the oxygen-evolving complex and a large number of cofactors. It forms dimeric complexes. Binds multiple chlorophylls and provides some of the ligands for the Ca-4Mn-5O cluster of the oxygen-evolving complex. It may also provide a ligand for a Cl- that is required for oxygen evolution. PSII binds additional chlorophylls, carotenoids and specific lipids. is required as a cofactor.

The protein resides in the plastid. It is found in the chloroplast thylakoid membrane. One of the components of the core complex of photosystem II (PSII). It binds chlorophyll and helps catalyze the primary light-induced photochemical processes of PSII. PSII is a light-driven water:plastoquinone oxidoreductase, using light energy to abstract electrons from H(2)O, generating O(2) and a proton gradient subsequently used for ATP formation. This chain is Photosystem II CP43 reaction center protein, found in Pinus thunbergii (Japanese black pine).